Reading from the N-terminus, the 241-residue chain is Small ribosomal subunit protein uS3 (241 aa).

The 71-residue stretch at 39 to 109 (IRQYITKNLS…QIRINVIEVQ (71 aa)) folds into the KH type-2 domain. A disordered region spans residues 214-241 (EEIPMPVPSQTPRRQRRRQQFEDRSGEE). Residues 232–241 (QQFEDRSGEE) show a composition bias toward basic and acidic residues.

It belongs to the universal ribosomal protein uS3 family. Part of the 30S ribosomal subunit. Forms a tight complex with proteins S10 and S14.

Binds the lower part of the 30S subunit head. Binds mRNA in the 70S ribosome, positioning it for translation. This chain is Small ribosomal subunit protein uS3, found in Rippkaea orientalis (strain PCC 8801 / RF-1) (Cyanothece sp. (strain PCC 8801)).